A 192-amino-acid chain; its full sequence is MDTSRLTLDHFLSRFQLLRPQMTHETLNQRQAAVLIPVVRRPQPGLLLTQRAIHLRKHAGQVAFPGGAVDSTDASLIAAALREAQEEVAIPPQAVEVIGVLPPVDSVTGFQVTPVVGIIPPNLPWRASEDEVSAVFEMPLAQALQLGRYHPLDVYRRGNSHRVWLSWYEHYFVWGMTANILRELALQIGVKP.

The region spanning Q29–S160 is the Nudix hydrolase domain. Residues G67–A89 carry the Nudix box motif. Mg(2+) contacts are provided by E83 and E87.

This sequence belongs to the Nudix hydrolase family. PCD1 subfamily. Mn(2+) is required as a cofactor. The cofactor is Mg(2+).

In terms of biological role, probably mediates the hydrolysis of some nucleoside diphosphate derivatives. This is an uncharacterized protein from Salmonella choleraesuis (strain SC-B67).